The primary structure comprises 974 residues: MAETSIFPIMMLTVMIGVGRGVTDSPGRVSRCGERPAANTSVSYGLLSRIVGGTSAVKGESPWMVSLKRDGKHFCGGTIISDKYVLTAAHCVLEKNFEFQVSVSIGDHDFAVYERSEQRFAIKSVFKHPNFKPSRPFNYDLAILELVESITFDKDIQPACLPSPDDVFPTGTLCMALGWGRLQENGRLPSSLQKVVLPLIEYRRCLSIMETVDRRLAFETVVCAGFPEGGKDACQGDSGGPFLCQRSQGRWVLVGVTSWGLGCARKWADNILDPVESKGSPGVFTDIQRLLNWLSENLNQDKPDFPTYQVQCSTNDGIEKGTTGEILLPTGYKKYYSNNEKCIWTIIVPRGKHILLTFKSFNVECDYSCDLDYLVIYSALGRLIGKFCGDVSPRPLLIADASITLKFISDFHEYKTGFSLFYEAVEPDTYPDSDCGSVAVIFEEGEIQTMNHPHLYSSHANCQWVVHSPANYIIKITFLVFEVEPSEGCIFDRLVVYHDLQGTVVAGFFCGFALPDPVLSVSNVMQITFTSDYSANYLGFRAVISFVLPSSPVKPEKGNNQPRKNQDAMQHFDEGCGVSPLPPRFLYHNLIKAEEAMPNSWPWHVSINFGNKHVCNGAILSKTFVVTSANCVADREEFPSIGLIVAGLHDLESSINTQKRPVEYVIVHPDYNRLSKDYDVALIHVQRPFQYNSYVQPICLPDGHSRLEPSKLCVVSGWDLNVELSTKLQQLEVPVLMDDVCKKYYDGITDRMFCAGVIAEEDNASCLAQSGAPLVCQSAPGTYAIFGIVSRGVGCNETPKAGVYSSVFLFIPWIMETILSVAGIIDTDSEPHHPLFPPDKPSQQKALLPDSPPSSSSQDIYVTCKDVLSLQSPGEIKLVASGQDGPEGGRCQLIFQAPEGHFILLTFKQLSHEHYSLIIYEGASSNKTFKAQLMEEKIPTIMKSAGAVITLEASSTAQDSALHLWLSYSFHNQN.

A signal peptide spans 1-21; it reads MAETSIFPIMMLTVMIGVGRG. Residues 22-49 constitute a propeptide, activation peptide; sequence VTDSPGRVSRCGERPAANTSVSYGLLSR. Asn39 is a glycosylation site (N-linked (GlcNAc...) asparagine). The Peptidase S1 1 domain occupies 50–299; the sequence is IVGGTSAVKG…LLNWLSENLN (250 aa). A disulfide bond links Cys75 and Cys91. Catalysis depends on His90, which acts as the Charge relay system. Residues Val112 and Glu117 each contribute to the Ca(2+) site. Asp140 acts as the Charge relay system in catalysis. 11 disulfides stabilise this stretch: Cys174/Cys244, Cys205/Cys223, Cys234/Cys263, Cys312/Cys342, Cys369/Cys388, Cys435/Cys462, Cys489/Cys510, Cys615/Cys631, Cys713/Cys776, Cys741/Cys754, and Cys766/Cys795. Ser238 acts as the Charge relay system in catalysis. CUB domains are found at residues 312 to 425 and 435 to 547; these read CSTN…YEAV and CGSV…ISFV. Residues 590–819 form the Peptidase S1 2 domain; the sequence is LIKAEEAMPN…FIPWIMETIL (230 aa). The propeptide at 590 to 974 is activation peptide; the sequence is LIKAEEAMPN…WLSYSFHNQN (385 aa). A glycan (N-linked (GlcNAc...) asparagine) is linked at Asn763. Positions 830-858 are disordered; sequence EPHHPLFPPDKPSQQKALLPDSPPSSSSQ. The N-linked (GlcNAc...) asparagine glycan is linked to Asn926.

It belongs to the peptidase S1 family. In terms of processing, the catalytically inactive 107 kDa form is processed both N- and C-terminally to give rise to the 66 kDa catalytically active form and inactive forms of 82 kDa and 59 kDa. In terms of tissue distribution, expressed specifically in the cells lining the bottom of epithelial folds in the oviductal pars recta.

It is found in the secreted. The catalysed reaction is Preferential cleavage at 371-Gly-Ser-Arg-|-Trp-374 of glycoprotein gp43 in Xenopus laevis coelemic egg envelope to yield gp41.. Mediates gamete interaction by affecting the vitelline coat. This chain is Ovochymase-2 (OVCH2), found in Bufo japonicus (Japanese common toad).